The following is a 379-amino-acid chain: Carbamoyl phosphate synthase small chain (379 aa).

The CPSase stretch occupies residues 1–189 (MSKLALLVLE…GLPEAKDDSE (189 aa)). 3 residues coordinate L-glutamine: Ser-47, Gly-241, and Gly-243. The Glutamine amidotransferase type-1 domain maps to 193 to 379 (HVVAYDFGAK…FIELIKKHSA (187 aa)). Cys-269 acts as the Nucleophile in catalysis. Residues Leu-270, Gln-273, Asn-311, Gly-313, and Phe-314 each contribute to the L-glutamine site. Active-site residues include His-353 and Glu-355.

Belongs to the CarA family. In terms of assembly, composed of two chains; the small (or glutamine) chain promotes the hydrolysis of glutamine to ammonia, which is used by the large (or ammonia) chain to synthesize carbamoyl phosphate. Tetramer of heterodimers (alpha,beta)4.

It carries out the reaction hydrogencarbonate + L-glutamine + 2 ATP + H2O = carbamoyl phosphate + L-glutamate + 2 ADP + phosphate + 2 H(+). It catalyses the reaction L-glutamine + H2O = L-glutamate + NH4(+). The protein operates within amino-acid biosynthesis; L-arginine biosynthesis; carbamoyl phosphate from bicarbonate: step 1/1. It participates in pyrimidine metabolism; UMP biosynthesis via de novo pathway; (S)-dihydroorotate from bicarbonate: step 1/3. Small subunit of the glutamine-dependent carbamoyl phosphate synthetase (CPSase). CPSase catalyzes the formation of carbamoyl phosphate from the ammonia moiety of glutamine, carbonate, and phosphate donated by ATP, constituting the first step of 2 biosynthetic pathways, one leading to arginine and/or urea and the other to pyrimidine nucleotides. The small subunit (glutamine amidotransferase) binds and cleaves glutamine to supply the large subunit with the substrate ammonia. The sequence is that of Carbamoyl phosphate synthase small chain from Vibrio parahaemolyticus serotype O3:K6 (strain RIMD 2210633).